The chain runs to 352 residues: Photosystem II D2 protein (352 aa).

A helical transmembrane segment spans residues 40–60; sequence CAYLALGGWLTGTTFVTSWYT. A chlorophyll a-binding site is contributed by His-117. The helical transmembrane segment at 124-140 threads the bilayer; that stretch reads GFMLRQFEIARLVGVRP. Residues Gln-129 and Asn-142 each coordinate pheophytin a. The chain crosses the membrane as a helical span at residues 152–165; sequence VFVSVFLIYPLGQS. Residue His-197 coordinates chlorophyll a. The helical transmembrane segment at 207–227 threads the bilayer; the sequence is GALLCAIHGATVENTLFQDGE. A plastoquinone is bound by residues His-214 and Phe-261. A Fe cation-binding site is contributed by His-214. His-268 contributes to the Fe cation binding site. Residues 278 to 294 traverse the membrane as a helical segment; sequence GLWMSSIGVVGLALNLR.

The protein belongs to the reaction center PufL/M/PsbA/D family. PSII is composed of 1 copy each of membrane proteins PsbA, PsbB, PsbC, PsbD, PsbE, PsbF, PsbH, PsbI, PsbJ, PsbK, PsbL, PsbM, PsbT, PsbX, PsbY, PsbZ, Psb30/Ycf12, peripheral proteins PsbO, CyanoQ (PsbQ), PsbU, PsbV and a large number of cofactors. It forms dimeric complexes. The cofactor is The D1/D2 heterodimer binds P680, chlorophylls that are the primary electron donor of PSII, and subsequent electron acceptors. It shares a non-heme iron and each subunit binds pheophytin, quinone, additional chlorophylls, carotenoids and lipids. There is also a Cl(-1) ion associated with D1 and D2, which is required for oxygen evolution. The PSII complex binds additional chlorophylls, carotenoids and specific lipids..

Its subcellular location is the cellular thylakoid membrane. It carries out the reaction 2 a plastoquinone + 4 hnu + 2 H2O = 2 a plastoquinol + O2. Functionally, photosystem II (PSII) is a light-driven water:plastoquinone oxidoreductase that uses light energy to abstract electrons from H(2)O, generating O(2) and a proton gradient subsequently used for ATP formation. It consists of a core antenna complex that captures photons, and an electron transfer chain that converts photonic excitation into a charge separation. The D1/D2 (PsbA/PsbD) reaction center heterodimer binds P680, the primary electron donor of PSII as well as several subsequent electron acceptors. D2 is needed for assembly of a stable PSII complex. The sequence is that of Photosystem II D2 protein from Synechococcus sp. (strain JA-2-3B'a(2-13)) (Cyanobacteria bacterium Yellowstone B-Prime).